We begin with the raw amino-acid sequence, 376 residues long: Adipocyte plasma membrane-associated protein (376 aa).

The helical transmembrane segment at 1-17 threads the bilayer; it reads MTFLMLAVSLAIPLLGA. Asn-120 is a glycosylation site (N-linked (GlcNAc...) asparagine).

This sequence belongs to the strictosidine synthase family.

The protein localises to the membrane. Its function is as follows. Exhibits strong arylesterase activity with beta-naphthyl acetate and phenyl acetate. May play a role in adipocyte differentiation. This Rattus norvegicus (Rat) protein is Adipocyte plasma membrane-associated protein (Apmap).